A 407-amino-acid polypeptide reads, in one-letter code: Phosphopentomutase (407 aa).

Residues Asp-10, Asp-306, His-311, Asp-347, His-348, and His-359 each coordinate Mn(2+).

Belongs to the phosphopentomutase family. It depends on Mn(2+) as a cofactor.

It is found in the cytoplasm. It carries out the reaction 2-deoxy-alpha-D-ribose 1-phosphate = 2-deoxy-D-ribose 5-phosphate. It catalyses the reaction alpha-D-ribose 1-phosphate = D-ribose 5-phosphate. Its pathway is carbohydrate degradation; 2-deoxy-D-ribose 1-phosphate degradation; D-glyceraldehyde 3-phosphate and acetaldehyde from 2-deoxy-alpha-D-ribose 1-phosphate: step 1/2. In terms of biological role, isomerase that catalyzes the conversion of deoxy-ribose 1-phosphate (dRib-1-P) and ribose 1-phosphate (Rib-1-P) to deoxy-ribose 5-phosphate (dRib-5-P) and ribose 5-phosphate (Rib-5-P), respectively. The sequence is that of Phosphopentomutase from Yersinia enterocolitica serotype O:8 / biotype 1B (strain NCTC 13174 / 8081).